A 168-amino-acid chain; its full sequence is Disulfide bond formation protein B 1 (168 aa).

Residues methionine 1–phenylalanine 14 are Cytoplasmic-facing. The helical transmembrane segment at leucine 15 to tyrosine 31 threads the bilayer. Topologically, residues methionine 32–tyrosine 49 are periplasmic. Cysteine 41 and cysteine 44 are disulfide-bonded. A helical transmembrane segment spans residues alanine 50–proline 65. Residues glycine 66 to phenylalanine 72 are Cytoplasmic-facing. Residues phenylalanine 73–glycine 89 form a helical membrane-spanning segment. Residues asparagine 90–glutamine 144 are Periplasmic-facing. Cysteine 102 and cysteine 130 are joined by a disulfide. A helical transmembrane segment spans residues tryptophan 145–arginine 163. The Cytoplasmic segment spans residues asparagine 164–glycine 168.

This sequence belongs to the DsbB family.

Its subcellular location is the cell inner membrane. Its function is as follows. Required for disulfide bond formation in some periplasmic proteins. Acts by oxidizing the DsbA protein. This chain is Disulfide bond formation protein B 1, found in Pseudomonas entomophila (strain L48).